Consider the following 261-residue polypeptide: Cell division protein DivIB (261 aa).

Over 1-27 (MEKGKVVVLEDRVPKLKERRRQKANRR) the chain is Cytoplasmic. A helical membrane pass occupies residues 28 to 48 (LIAYLSFFFLFILCVLYFQSP). The interval 47-117 (SPLGAVGHVE…PNTIAIHVRE (71 aa)) is alpha. Over 49–261 (LGAVGHVEVS…KEDGDETTSP (213 aa)) the chain is Extracellular. The POTRA domain occupies 50 to 118 (GAVGHVEVSG…NTIAIHVREW (69 aa)). Residues 118-230 (WRRIAYVYDR…YPAIAAALDR (113 aa)) form a beta region. The tract at residues 231–260 (NVKGVIHLEVGSYFVPYSPPKKEDGDETTS) is gamma.

It belongs to the FtsQ/DivIB family. DivIB subfamily.

Its subcellular location is the cell membrane. Functionally, cell division protein that may be involved in stabilizing or promoting the assembly of the division complex. This Geobacillus kaustophilus (strain HTA426) protein is Cell division protein DivIB.